Reading from the N-terminus, the 2146-residue chain is Phospholipid-transporting ATPase ABCA7 (2146 aa).

The helical transmembrane segment at 22–42 threads the bilayer; that stretch reads PVQLLVELLWPLFLFFILVAV. Over 43-549 the chain is Extracellular; the sequence is RHSHPPLEHH…DVFLRVLSRS (507 aa). Residues C75 and C225 are joined by a disulfide bond. Residue N312 is glycosylated (N-linked (GlcNAc...) asparagine). 6 helical membrane-spanning segments follow: residues 550–570, 593–613, 626–646, 655–675, 687–707, and 727–747; these read LPLF…KAVV, LGWF…LVLV, GVVF…SFLL, LAAA…VLCV, VAAS…LALL, and VFSL…YGLA. Positions 807–1038 constitute an ABC transporter 1 domain; the sequence is VSVRSLEKRF…LGSGYYLTLV (232 aa). 841 to 848 provides a ligand contact to ATP; sequence GHNGAGKT. Residues 849-869 traverse the membrane as a helical segment; it reads TTLSILSGLFPPSGGSAFILG. Residues 1048 to 1066 show a composition bias toward basic and acidic residues; it reads EKADTDMEGSVDTRQEKKN. Disordered stretches follow at residues 1048-1072 and 1185-1209; these read EKAD…QGSR and TALE…DAVG. Residues 1243–1263 traverse the membrane as a helical segment; that stretch reads IVLPALFVGLALVFSLIVPPF. Residues 1264-1537 lie on the Extracellular side of the membrane; sequence GHYPALRLSP…ALMASSVDVL (274 aa). Cysteines 1345 and 1359 form a disulfide. Helical transmembrane passes span 1538-1558, 1584-1604, 1621-1641, 1649-1669, 1683-1703, and 1729-1749; these read VSIC…LVLI, FLWD…IFLA, LLLL…SFFF, VVLT…TFVL, ILKQ…LIDM, and VVGK…LFTL. One can recognise an ABC transporter 2 domain in the interval 1793–2025; sequence LVLRNLTKVY…FAAGHTLTLR (233 aa). ATP is bound at residue 1827–1834; that stretch reads GVNGAGKT. The disordered stretch occupies residues 2104–2146; it reads QGKDEDTEEQKEAGVGVDPAPGLQHPKRVSQFLDDPSTAETVL.

Belongs to the ABC transporter superfamily. ABCA family. Post-translationally, N-glycosylated. As to expression, expressed in leukocytes (at protein level). Widely expressed. Highly expressed in myelo-lymphatic tissues including peripheral leukocytes, thymus, spleen and bone marrow. Expressed in the hippocampus and the cerebellum. Isoform 2: Abundant in lymph node, spleen, thymus and trachea. Isoform 1: Strongly expressed in brain and bone marrow.

The protein localises to the cell membrane. It localises to the golgi apparatus membrane. Its subcellular location is the early endosome membrane. The protein resides in the cytoplasm. It is found in the cell projection. The protein localises to the ruffle membrane. It localises to the phagocytic cup. Its subcellular location is the endoplasmic reticulum. The enzyme catalyses ATP + H2O + phospholipidSide 1 = ADP + phosphate + phospholipidSide 2.. The catalysed reaction is a 1,2-diacyl-sn-glycero-3-phosphocholine(out) + ATP + H2O = a 1,2-diacyl-sn-glycero-3-phosphocholine(in) + ADP + phosphate + H(+). It carries out the reaction a 1,2-diacyl-sn-glycero-3-phospho-L-serine(out) + ATP + H2O = a 1,2-diacyl-sn-glycero-3-phospho-L-serine(in) + ADP + phosphate + H(+). With respect to regulation, ATPase activity is decreased by cholesterol and ceramide. ATPase activity is stimulated by phosphatidylserine, phosphatidylcholine and sphingomyelin, but phosphatidylserine is more effective. Functionally, catalyzes the translocation of specific phospholipids from the cytoplasmic to the extracellular/lumenal leaflet of membrane coupled to the hydrolysis of ATP. Transports preferentially phosphatidylserine over phosphatidylcholine. Plays a role in lipid homeostasis and macrophage-mediated phagocytosis. Binds APOA1 and may function in apolipoprotein-mediated phospholipid efflux from cells. May also mediate cholesterol efflux. May regulate cellular ceramide homeostasis during keratinocyte differentiation. Involved in lipid raft organization and CD1D localization on thymocytes and antigen-presenting cells, which plays an important role in natural killer T-cell development and activation. Plays a role in phagocytosis of apoptotic cells by macrophages. Macrophage phagocytosis is stimulated by APOA1 or APOA2, probably by stabilization of ABCA7. Also involved in phagocytic clearance of amyloid-beta by microglia cells and macrophages. Further limits amyloid-beta production by playing a role in the regulation of amyloid-beta A4 precursor protein (APP) endocytosis and/or processing. Amyloid-beta is the main component of amyloid plaques found in the brains of Alzheimer patients. This is Phospholipid-transporting ATPase ABCA7 from Homo sapiens (Human).